Consider the following 227-residue polypeptide: Cytochrome c oxidase subunit 2 (227 aa).

At 1 to 14 (MAYPLQLGFQDASS) the chain is on the mitochondrial intermembrane side. A helical membrane pass occupies residues 15-45 (PIMEELLHFHDHTLMIVFLISSLVLYIISLM). The Mitochondrial matrix portion of the chain corresponds to 46-59 (LTTKLTHTSTMDAQ). A helical membrane pass occupies residues 60-87 (EVETIWTILPAIILILIALPSLRILYMM). Over 88–227 (DEINNPSLTV…HFENWTTTML (140 aa)) the chain is Mitochondrial intermembrane. The Cu cation site is built by H161, C196, E198, C200, H204, and M207. E198 serves as a coordination point for Mg(2+).

This sequence belongs to the cytochrome c oxidase subunit 2 family. In terms of assembly, component of the cytochrome c oxidase (complex IV, CIV), a multisubunit enzyme composed of 14 subunits. The complex is composed of a catalytic core of 3 subunits MT-CO1, MT-CO2 and MT-CO3, encoded in the mitochondrial DNA, and 11 supernumerary subunits COX4I, COX5A, COX5B, COX6A, COX6B, COX6C, COX7A, COX7B, COX7C, COX8 and NDUFA4, which are encoded in the nuclear genome. The complex exists as a monomer or a dimer and forms supercomplexes (SCs) in the inner mitochondrial membrane with NADH-ubiquinone oxidoreductase (complex I, CI) and ubiquinol-cytochrome c oxidoreductase (cytochrome b-c1 complex, complex III, CIII), resulting in different assemblies (supercomplex SCI(1)III(2)IV(1) and megacomplex MCI(2)III(2)IV(2)). Found in a complex with TMEM177, COA6, COX18, COX20, SCO1 and SCO2. Interacts with TMEM177 in a COX20-dependent manner. Interacts with COX20. Interacts with COX16. Cu cation is required as a cofactor.

It is found in the mitochondrion inner membrane. It carries out the reaction 4 Fe(II)-[cytochrome c] + O2 + 8 H(+)(in) = 4 Fe(III)-[cytochrome c] + 2 H2O + 4 H(+)(out). Functionally, component of the cytochrome c oxidase, the last enzyme in the mitochondrial electron transport chain which drives oxidative phosphorylation. The respiratory chain contains 3 multisubunit complexes succinate dehydrogenase (complex II, CII), ubiquinol-cytochrome c oxidoreductase (cytochrome b-c1 complex, complex III, CIII) and cytochrome c oxidase (complex IV, CIV), that cooperate to transfer electrons derived from NADH and succinate to molecular oxygen, creating an electrochemical gradient over the inner membrane that drives transmembrane transport and the ATP synthase. Cytochrome c oxidase is the component of the respiratory chain that catalyzes the reduction of oxygen to water. Electrons originating from reduced cytochrome c in the intermembrane space (IMS) are transferred via the dinuclear copper A center (CU(A)) of subunit 2 and heme A of subunit 1 to the active site in subunit 1, a binuclear center (BNC) formed by heme A3 and copper B (CU(B)). The BNC reduces molecular oxygen to 2 water molecules using 4 electrons from cytochrome c in the IMS and 4 protons from the mitochondrial matrix. This is Cytochrome c oxidase subunit 2 (MT-CO2) from Tupaia glis (Common tree shrew).